The primary structure comprises 346 residues: T-box protein 12 (346 aa).

Residues 33-48 (DEEDVEVDVEDVDDVD) show a composition bias toward acidic residues. The segment at 33-66 (DEEDVEVDVEDVDDVDLSSIPSKSPERSRGRPKI) is disordered. Residues 86 to 268 (LWAKFFDLGT…KNPFAKGFRD (183 aa)) constitute a DNA-binding region (T-box).

It localises to the nucleus. Its function is as follows. Transcription factor. Involved in cell fate determination; required to pattern the posterior hindgut. Involved in motor neuron fate determination and maintenance, acting as a transcriptional repressor to counteract gene activation by transcription factor unc-3 in a subset of motor neurons. Required throughout development to repress transcription by unc-3, probably acting by binding to specific promoter elements. Represses expression of VA and VB motor neuron-specific effector genes, such as DEG/ENaC channel del-1 and the innexin inx-12, in DA and DB motor neurons. Represses expression of transcription factor bnc-1, perhaps acting directly, in DA and DB motor neurons. The polypeptide is T-box protein 12 (mab-9) (Caenorhabditis elegans).